The chain runs to 162 residues: MSKVAIYPGTFDPITNGHVDLVDRALNIFDRIVVAVSTAYGKKTLFDLDTRELMIKEVFKDNDRVKVVSFEGLLVDTAVKHGACAIVRGLRAVSDFDYEFQMSSMNNKLNSDIQTIFLTPSEKFSCISSTLVRAVAIHNYQRVGEFVPECVFDRIELKYSKD.

Residue Thr10 coordinates substrate. Residues 10 to 11 (TF) and His18 each bind ATP. Residues Lys42, Leu74, and Arg88 each contribute to the substrate site. Residues 89-91 (GLR), Glu99, and 124-130 (FSCISST) contribute to the ATP site.

The protein belongs to the bacterial CoaD family. As to quaternary structure, homohexamer. Requires Mg(2+) as cofactor.

It is found in the cytoplasm. It carries out the reaction (R)-4'-phosphopantetheine + ATP + H(+) = 3'-dephospho-CoA + diphosphate. The protein operates within cofactor biosynthesis; coenzyme A biosynthesis; CoA from (R)-pantothenate: step 4/5. Its function is as follows. Reversibly transfers an adenylyl group from ATP to 4'-phosphopantetheine, yielding dephospho-CoA (dPCoA) and pyrophosphate. This Francisella philomiragia subsp. philomiragia (strain ATCC 25017 / CCUG 19701 / FSC 153 / O#319-036) protein is Phosphopantetheine adenylyltransferase.